The primary structure comprises 348 residues: MKKEQKKLTEMTTAGGUAAKIGPEVLASVLSQLPKNDNIENLLVGLDTADDAAVYKLNDDMALIQTLDFFTPMVDDPYVFGQIAASNSLSDVYAMGGKPLVAMNIVCFPSCHDMDVLAEILKGGFDKVKESGALLVGGHTVDDKEPKYGLSVSGIVSPNKVLSNATAKPGDKLIITKPIGVGVLNTAMKEGMVEQHIADKVIEIMIHLNKYAAMSFEKFDVNSVTDITGFGLLGHTLEMAKASEVSIEIESKHVPIIEGAIEMAQMGIIPAGMYKNMHYVSKDVEVVGNIEVAVQDILYDPQTSGGLLISVKEELAEELVKDMKLNGAIEAKIIGSVVPKGEKYITVL.

Sec-17 is a catalytic residue. Residue Sec-17 is a non-standard amino acid, selenocysteine. Residues Lys-20 and 48-50 (TAD) contribute to the ATP site. Asp-51 is a binding site for Mg(2+). ATP-binding positions include Asp-68, Asp-91, and 138–140 (GHT). Asp-91 provides a ligand contact to Mg(2+). Position 226 (Asp-226) interacts with Mg(2+).

It belongs to the selenophosphate synthase 1 family. Class I subfamily. In terms of assembly, homodimer. It depends on Mg(2+) as a cofactor.

The catalysed reaction is hydrogenselenide + ATP + H2O = selenophosphate + AMP + phosphate + 2 H(+). Synthesizes selenophosphate from selenide and ATP. The sequence is that of Selenide, water dikinase from Clostridioides difficile (strain 630) (Peptoclostridium difficile).